The chain runs to 372 residues: Citrate/2-methylcitrate synthase (372 aa).

His-188 is a binding site for substrate. Residue His-223 is part of the active site. 256 to 260 is a binding site for CoA; the sequence is KIMGF. His-262 is a catalytic residue. Arg-272 provides a ligand contact to substrate. Asp-314 is an active-site residue. Residues Arg-339 and Arg-358 each contribute to the substrate site.

Belongs to the citrate synthase family.

The catalysed reaction is propanoyl-CoA + oxaloacetate + H2O = 2-methylcitrate + CoA + H(+). It carries out the reaction oxaloacetate + acetyl-CoA + H2O = citrate + CoA + H(+). It participates in carbohydrate metabolism; tricarboxylic acid cycle; isocitrate from oxaloacetate: step 1/2. Involved in both the tricarboxylic acid (TCA) and methylcitric acid cycles. Has both 2-methylcitrate synthase and citrate synthase activities. Catalyzes the condensation of propionyl-CoA and oxaloacetate to yield 2-methylcitrate (2-MC) and CoA, and the condensation of acetyl-CoA and oxaloacetate to yield citrate and CoA. Has 2.3-fold higher activity as a 2-methylcitrate synthase. Catalyzes the formation of either (2S,3R)- or (2R,3S)-2-methylcitrate. The protein is Citrate/2-methylcitrate synthase of Bacillus subtilis (strain 168).